Consider the following 314-residue polypeptide: Carbamate kinase (314 aa).

This sequence belongs to the carbamate kinase family.

The protein localises to the cytoplasm. It catalyses the reaction hydrogencarbonate + NH4(+) + ATP = carbamoyl phosphate + ADP + H2O + H(+). The protein operates within metabolic intermediate metabolism; carbamoyl phosphate degradation; CO(2) and NH(3) from carbamoyl phosphate: step 1/1. This chain is Carbamate kinase (arcC), found in Latilactobacillus sakei (Lactobacillus sakei).